A 377-amino-acid polypeptide reads, in one-letter code: MTSTTASPAEIAANSSKKVIVGMSGGVDSSVSAYLLKQQGYQVEGLFMKNWEEDDTDEYCAAAEDLKDAQAVCDKLGIKLHTVNFAAEYWDNVFEYFLAEYKAGRTPNPDIMCNKEIKFKAFLEFADDILDADYIAMGHYVRRRDTDGKTEMLRGIDGNKDQSYFLYTLSHEQVARSLFPVGELEKPEVRRIAEEQGLITHDKKDSTGICFIGERKFKDFLATYLPAQPGNIETPEGDIIGRHEGLMYHTLGQRKGLGIGGMKNSNDDPWYVVDKDMARNVLVVAQGHEHPRLMSKGMRVNQLHWVDRTGPADGATISVKTRYRQQDIPCTVKIIDEQTIEVLFDEPVAAVTPGQSAVFYDGEVCLGGGIIDTLIKD.

ATP-binding positions include 22-29 and methionine 48; that span reads GMSGGVDS. Residues 108-110 form an interaction with target base in tRNA region; the sequence is NPD. Cysteine 113 functions as the Nucleophile in the catalytic mechanism. A disulfide bridge connects residues cysteine 113 and cysteine 210. Glycine 138 contributes to the ATP binding site. Positions 160 to 162 are interaction with tRNA; that stretch reads KDQ. The active-site Cysteine persulfide intermediate is cysteine 210. The tract at residues 322 to 323 is interaction with tRNA; that stretch reads RY.

Belongs to the MnmA/TRMU family.

The protein resides in the cytoplasm. It catalyses the reaction S-sulfanyl-L-cysteinyl-[protein] + uridine(34) in tRNA + AH2 + ATP = 2-thiouridine(34) in tRNA + L-cysteinyl-[protein] + A + AMP + diphosphate + H(+). Catalyzes the 2-thiolation of uridine at the wobble position (U34) of tRNA, leading to the formation of s(2)U34. The sequence is that of tRNA-specific 2-thiouridylase MnmA from Shewanella amazonensis (strain ATCC BAA-1098 / SB2B).